The primary structure comprises 149 residues: Probable ubiquitin-conjugating enzyme E2 W (149 aa).

One can recognise a UBC core domain in the interval 4 to 149 (RYAKRLQKEL…VRWMFHDDTV (146 aa)). The active-site Glycyl thioester intermediate is C88.

It belongs to the ubiquitin-conjugating enzyme family.

The catalysed reaction is S-ubiquitinyl-[E1 ubiquitin-activating enzyme]-L-cysteine + [E2 ubiquitin-conjugating enzyme]-L-cysteine = [E1 ubiquitin-activating enzyme]-L-cysteine + S-ubiquitinyl-[E2 ubiquitin-conjugating enzyme]-L-cysteine.. It carries out the reaction S-ubiquitinyl-[E1 ubiquitin-activating enzyme]-L-cysteine + [acceptor protein]-N-terminal-amino acid = [E1 ubiquitin-activating enzyme]-L-cysteine + N-terminal-ubiquitinyl-[acceptor protein].. It functions in the pathway protein modification; protein ubiquitination. Functionally, catalyzes the covalent attachment of ubiquitin to other proteins. In Dictyostelium discoideum (Social amoeba), this protein is Probable ubiquitin-conjugating enzyme E2 W (ube2w).